The sequence spans 987 residues: Ephrin type-B receptor 4a (987 aa).

An N-terminal signal peptide occupies residues Met1–Ala24. At Glu25–Gly548 the chain is on the extracellular side. Residues Glu26–Arg205 enclose the Eph LBD domain. Cystine bridges form between Cys70/Cys187 and Cys104/Cys114. The tract at residues Asp319–Asn340 is disordered. Over residues Thr326–Pro335 the composition is skewed to pro residues. Fibronectin type-III domains follow at residues Pro328 to Asn438 and Leu442 to Asp536. A helical transmembrane segment spans residues Ile549–Ile569. Topologically, residues Arg570–Tyr987 are cytoplasmic. In terms of domain architecture, Protein kinase spans Val621–Ile884. Residues Ile627–Val635 and Lys653 contribute to the ATP site. Catalysis depends on Asp746, which acts as the Proton acceptor. The 65-residue stretch at Ser914–Gln978 folds into the SAM domain.

The protein belongs to the protein kinase superfamily. Tyr protein kinase family. Ephrin receptor subfamily.

Its subcellular location is the cell membrane. The enzyme catalyses L-tyrosyl-[protein] + ATP = O-phospho-L-tyrosyl-[protein] + ADP + H(+). Its function is as follows. Receptor tyrosine kinase which binds promiscuously transmembrane ephrin-B family ligands residing on adjacent cells, leading to contact-dependent bidirectional signaling into neighboring cells. The signaling pathway downstream of the receptor is referred to as forward signaling while the signaling pathway downstream of the ephrin ligand is referred to as reverse signaling. Together with its cognate ligand/functional ligand EFNB2 is involved in the regulation of cell adhesion and cell migration, and plays a central role in heart morphogenesis, angiogenesis and blood vessel remodeling and permeability. EPHB4-mediated forward signaling controls cellular repulsion and segregation from EFNB2-expressing cells. Involved in somitogenesis. This Danio rerio (Zebrafish) protein is Ephrin type-B receptor 4a.